Here is a 134-residue protein sequence, read N- to C-terminus: Galectin-1 (134 aa).

Alanine 1 is modified (N-acetylalanine). Positions 4-134 (GVAVTNLNLK…GLAFKSITTE (131 aa)) constitute a Galectin domain. Residues 45–49 (HFNAR), histidine 53, asparagine 62, and 69–72 (WGSE) contribute to the a beta-D-galactoside site.

Homodimer.

It is found in the secreted. The protein localises to the extracellular space. Its subcellular location is the extracellular matrix. Its function is as follows. May regulate cell apoptosis and cell differentiation. Binds beta-galactoside and a wide array of complex carbohydrates. The protein is Galectin-1 of Rhinella arenarum (Argentine common toad).